The primary structure comprises 754 residues: 5-methyltetrahydropteroyltriglutamate--homocysteine methyltransferase (754 aa).

5-methyltetrahydropteroyltri-L-glutamate contacts are provided by residues 17-20 (RELK) and Lys-117. Residues 431-433 (IGS) and Glu-484 each bind L-homocysteine. L-methionine-binding positions include 431-433 (IGS) and Glu-484. Residues 515–516 (RC) and Trp-561 each bind 5-methyltetrahydropteroyltri-L-glutamate. Residue Asp-599 participates in L-homocysteine binding. Asp-599 is an L-methionine binding site. Glu-605 contacts 5-methyltetrahydropteroyltri-L-glutamate. Zn(2+)-binding residues include His-641, Cys-643, and Glu-665. Catalysis depends on His-694, which acts as the Proton donor. Cys-726 contributes to the Zn(2+) binding site.

This sequence belongs to the vitamin-B12 independent methionine synthase family. It depends on Zn(2+) as a cofactor.

The catalysed reaction is 5-methyltetrahydropteroyltri-L-glutamate + L-homocysteine = tetrahydropteroyltri-L-glutamate + L-methionine. The protein operates within amino-acid biosynthesis; L-methionine biosynthesis via de novo pathway; L-methionine from L-homocysteine (MetE route): step 1/1. Its function is as follows. Catalyzes the transfer of a methyl group from 5-methyltetrahydrofolate to homocysteine resulting in methionine formation. In Salmonella newport (strain SL254), this protein is 5-methyltetrahydropteroyltriglutamate--homocysteine methyltransferase.